Reading from the N-terminus, the 157-residue chain is Transcription elongation factor GreA (157 aa).

Residues 47–75 (ENAEYDAAREKQGQIEDRITELENILSNA) are a coiled coil.

The protein belongs to the GreA/GreB family.

Functionally, necessary for efficient RNA polymerase transcription elongation past template-encoded arresting sites. The arresting sites in DNA have the property of trapping a certain fraction of elongating RNA polymerases that pass through, resulting in locked ternary complexes. Cleavage of the nascent transcript by cleavage factors such as GreA or GreB allows the resumption of elongation from the new 3'terminus. GreA releases sequences of 2 to 3 nucleotides. The protein is Transcription elongation factor GreA of Mycoplasmopsis pulmonis (strain UAB CTIP) (Mycoplasma pulmonis).